We begin with the raw amino-acid sequence, 779 residues long: ATP-dependent RNA helicase SUPV3L1, mitochondrial (779 aa).

A mitochondrion-targeting transit peptide spans 1–40; it reads MSLPRCTLLWARLPAGRGAGPRAAPCSALRALVGSFPGAS. Residue Lys-99 is modified to N6-acetyllysine. In terms of domain architecture, Helicase ATP-binding spans 194 to 334; the sequence is EARARQRKII…AINLVSELLY (141 aa). 207-214 contributes to the ATP binding site; that stretch reads GPTNSGKT. In terms of domain architecture, Helicase C-terminal spans 353–521; sequence VLDHALESLD…PTAEQIEMFA (169 aa). The interval 650–779 is interaction with LAMTOR5, important for protein stability; it reads PDSSLVRSLQ…RRKKKDPDSD (130 aa). Residues 693–703 are compositionally biased toward polar residues; sequence SGDQSRLSGAS. 2 disordered regions span residues 693-732 and 754-779; these read SGDQ…KELP and EWLT…PDSD. Position 725 is a phosphoserine (Ser-725). The segment covering 761–779 has biased composition (basic and acidic residues); the sequence is EHSREKVGTRRKKKDPDSD.

This sequence belongs to the helicase family. Homodimer; in free form. Component of the mitochondrial degradosome (mtEXO) complex which is a heteropentamer containing 2 copies of SUPV3L1 and 3 copies of PNPT1. As part of mitochondrial degradosome complex, interacts with GRSF1 in a RNA-dependent manner; the interaction enhances the activity of the complex. Interacts with LAMTOR5/HBXIP, WRN and BLM. Requires Mg(2+) as cofactor. It depends on Mn(2+) as a cofactor.

The protein resides in the nucleus. It localises to the mitochondrion matrix. The protein localises to the mitochondrion nucleoid. The enzyme catalyses ATP + H2O = ADP + phosphate + H(+). With respect to regulation, helicase activity toward DNA substrate is inhibited by micromolar concentrations of 5,6-dichloro-1-(beta-D-ribofuranosyl)benzotriazole (DRBT) and 4,5,6,7-tetrabromobenzotriazole (TBBT). Helicase activity toward RNA substrate is inhibited by elevated concentrations of TBBT. Inhibited by some ring-expanded nucleoside analogs. Major helicase player in mitochondrial RNA metabolism. Component of the mitochondrial degradosome (mtEXO) complex, that degrades 3' overhang double-stranded RNA with a 3'-to-5' directionality in an ATP-dependent manner. Involved in the degradation of non-coding mitochondrial transcripts (MT-ncRNA) and tRNA-like molecules. ATPase and ATP-dependent multisubstrate helicase, able to unwind double-stranded (ds) DNA and RNA, and RNA/DNA heteroduplexes in the 5'-to-3' direction. Plays a role in the RNA surveillance system in mitochondria; regulates the stability of mature mRNAs, the removal of aberrantly formed mRNAs and the rapid degradation of non coding processing intermediates. Also implicated in recombination and chromatin maintenance pathways. May protect cells from apoptosis. Associates with mitochondrial DNA. The chain is ATP-dependent RNA helicase SUPV3L1, mitochondrial (Supv3l1) from Mus musculus (Mouse).